Here is a 469-residue protein sequence, read N- to C-terminus: MNNSEQFLSPRMGRVEQIHFVGIGGAGMCGIAEVLHNQGYRITGSDLGESGTVQRLRSLGIQVYIGHRLENIKGADVVVRSSAVDFNNPEIVAARELMIPVIPRAAMLAELMRFRHGIAIAGTHGKTTTTSLVSSLLAEGGLDPSFVIGGKLNSCGANAQLGKSAYFVVEADESDASFLFLKPMMAVVTNIDADHMDTYEGDFEKLRTTFLEFLHHLPFYGLAVVCLEDEEICRILPAIQRPTLTYGFKEEAHYRAINWTQKGMLSEFVVVRPAPHKQLTIQFQYPGRHNVLNALASIAIATELGVDDDSIVRGLQKFQGVGRRFQMLGEKQFEKGAAIIVDDYGHHPQEILSTIDAFRRVWPERRLVHVFQPHRYTRTQSLHRQFVDALSLSDELLLMDIYAAGETAIPGVTSENLANEIRSRDKRVTIVSEQSLKATLDEFIKDGDVILMQGAGSIGQMAVNLMKNM.

122-128 (GTHGKTT) contacts ATP.

This sequence belongs to the MurCDEF family.

It is found in the cytoplasm. It carries out the reaction UDP-N-acetyl-alpha-D-muramate + L-alanine + ATP = UDP-N-acetyl-alpha-D-muramoyl-L-alanine + ADP + phosphate + H(+). The protein operates within cell wall biogenesis; peptidoglycan biosynthesis. Its function is as follows. Cell wall formation. The sequence is that of UDP-N-acetylmuramate--L-alanine ligase from Legionella pneumophila (strain Lens).